The following is a 98-amino-acid chain: Large ribosomal subunit protein uL23 (98 aa).

This sequence belongs to the universal ribosomal protein uL23 family. Part of the 50S ribosomal subunit. Contacts protein L29, and trigger factor when it is bound to the ribosome.

Functionally, one of the early assembly proteins it binds 23S rRNA. One of the proteins that surrounds the polypeptide exit tunnel on the outside of the ribosome. Forms the main docking site for trigger factor binding to the ribosome. This Halorhodospira halophila (strain DSM 244 / SL1) (Ectothiorhodospira halophila (strain DSM 244 / SL1)) protein is Large ribosomal subunit protein uL23.